The primary structure comprises 549 residues: Membrane protein insertase YidC (549 aa).

Residues 9-29 (LRLILAIALSFLFIALYSYFF) traverse the membrane as a helical segment. Low complexity predominate over residues 37–51 (TETTKQETTNNHTAT). Positions 37-56 (TETTKQETTNNHTATSPTAS) are disordered. The next 5 helical transmembrane spans lie at 328 to 348 (VIEYGLITFFAKGVFVLLDYL), 351 to 371 (FVGNWGWAIILLTIIVRIILY), 417 to 437 (GANPLGGCLPLILQIPVFFAI), 452 to 472 (WVLWIHDLSIMDPYFILPLLM), and 498 to 518 (LLPLLFTIFLITFPAGLVLYW).

It belongs to the OXA1/ALB3/YidC family. Type 1 subfamily. As to quaternary structure, interacts with the Sec translocase complex via SecD. Specifically interacts with transmembrane segments of nascent integral membrane proteins during membrane integration.

It localises to the cell inner membrane. Functionally, required for the insertion and/or proper folding and/or complex formation of integral membrane proteins into the membrane. Involved in integration of membrane proteins that insert both dependently and independently of the Sec translocase complex, as well as at least some lipoproteins. Aids folding of multispanning membrane proteins. The chain is Membrane protein insertase YidC from Helicobacter pylori (strain J99 / ATCC 700824) (Campylobacter pylori J99).